The chain runs to 388 residues: MTIMSDLPRDLLAEILSRVPLTSLRAVRLTCKKWNDLSKDRSFLKKQIVETKKKQLESKEIEVIMMRNFRVYLTSIDIHNNVDPSFTPKGTLISLSDDANHHQVDNVSRVFHCDGLLLCITKDLHYRLVVWNPYFGQTRWIQPRNSYHRKDNYALGYDEKKNHKILRLKDNYYAPRERICEFELYSFESNSWKVVLDVSPDWYIPSYNRGLSLKGNTYWYATEKHVNVDFLICFDFTTEKFGPRLPLPFNATESPTYEDVVTLSSVGEEQLAVLFQSEYTLMMEIWVTSKVESTEVLWNKLFLEVDLIAISSHFQFLAEAGSFFIDQKKNVVVVFDKDMDEATDRDMAYVVGKNGYFKKVDIGEEAYTSCFPLVCSYVPSSEQIRQLT.

Positions 1–47 constitute an F-box domain; the sequence is MTIMSDLPRDLLAEILSRVPLTSLRAVRLTCKKWNDLSKDRSFLKKQ.

This chain is F-box protein At5g42460, found in Arabidopsis thaliana (Mouse-ear cress).